The following is a 358-amino-acid chain: MESKAFNKPKVELHVHLDGSIKPETIIHFAKKRQIKLPADTVEGLLEHVSYKEPLSLTEFLQKFNHYMPAIAGDREAIKRIAYEFVEMKAKEGVIYVEVRYSPHFLANSKVDPIPWGQKEGDITPDEVVDLVNQGLRKGEKTFNIKARSILCCMRHMPNWSSEVIELCKKYQNDTVVAIDLAGDESLNCESYPGHRKAYEEAVKCGIHRTVHAGEVGPPSVVKEAVEVLKAERIGHGYHTTEDPNLYKELLENNMHFEVCPWSSYLTSACHPDFTKHPATQFRKDKANFSLNTDDPLIFGSTLDVDYSIAVQHMGFTEDEFKRVNINAAKSSFLPDNEKKELLYKLYEAYGMILSTGL.

Zn(2+) contacts are provided by His-14 and His-16. Positions 16, 18, and 183 each coordinate substrate. His-212 lines the Zn(2+) pocket. Glu-215 functions as the Proton donor in the catalytic mechanism. Asp-294 serves as a coordination point for Zn(2+). Asp-295 is a binding site for substrate.

Belongs to the metallo-dependent hydrolases superfamily. Adenosine and AMP deaminases family. Requires Zn(2+) as cofactor.

The protein resides in the cell membrane. It is found in the cell junction. Its subcellular location is the cytoplasmic vesicle lumen. The protein localises to the cytoplasm. It localises to the lysosome. It carries out the reaction adenosine + H2O + H(+) = inosine + NH4(+). The enzyme catalyses 2'-deoxyadenosine + H2O + H(+) = 2'-deoxyinosine + NH4(+). Catalyzes the hydrolytic deamination of adenosine and 2-deoxyadenosine. Plays an important role in purine metabolism and in adenosine homeostasis. Modulates signaling by extracellular adenosine, and so contributes indirectly to cellular signaling events. May act as a positive regulator of T-cell coactivation. The sequence is that of Adenosine deaminase (ada) from Xenopus laevis (African clawed frog).